The sequence spans 138 residues: Small ribosomal subunit protein uS12 (138 aa).

Residues 1 to 20 form a disordered region; sequence MPTISQLINHGRSAKTSKSK. Aspartate 102 bears the 3-methylthioaspartic acid mark. The segment at 116–138 is disordered; that stretch reads DAAGVDKRKQGRSIYGTKKPKEN.

This sequence belongs to the universal ribosomal protein uS12 family. In terms of assembly, part of the 30S ribosomal subunit. Contacts proteins S8 and S17. May interact with IF1 in the 30S initiation complex.

Functionally, with S4 and S5 plays an important role in translational accuracy. Interacts with and stabilizes bases of the 16S rRNA that are involved in tRNA selection in the A site and with the mRNA backbone. Located at the interface of the 30S and 50S subunits, it traverses the body of the 30S subunit contacting proteins on the other side and probably holding the rRNA structure together. The combined cluster of proteins S8, S12 and S17 appears to hold together the shoulder and platform of the 30S subunit. The protein is Small ribosomal subunit protein uS12 of Metamycoplasma arthritidis (strain 158L3-1) (Mycoplasma arthritidis).